Consider the following 288-residue polypeptide: Pantothenate synthetase (288 aa).

35–42 (MGALHDGH) contacts ATP. The Proton donor role is filled by H42. A (R)-pantoate-binding site is contributed by Q66. Q66 is a binding site for beta-alanine. 152 to 155 (GEKD) provides a ligand contact to ATP. Q158 contributes to the (R)-pantoate binding site. Residues G181 and 189–192 (LSSR) each bind ATP.

The protein belongs to the pantothenate synthetase family. Homodimer.

It localises to the cytoplasm. It carries out the reaction (R)-pantoate + beta-alanine + ATP = (R)-pantothenate + AMP + diphosphate + H(+). The protein operates within cofactor biosynthesis; (R)-pantothenate biosynthesis; (R)-pantothenate from (R)-pantoate and beta-alanine: step 1/1. Catalyzes the condensation of pantoate with beta-alanine in an ATP-dependent reaction via a pantoyl-adenylate intermediate. The protein is Pantothenate synthetase of Maricaulis maris (strain MCS10) (Caulobacter maris).